Consider the following 183-residue polypeptide: Large ribosomal subunit protein eL18 (183 aa).

The tract at residues 146-183 (HFGPAPGVPHSHTKPYVRSKGRKFEKARGRRKSRGFRV) is disordered. 2 stretches are compositionally biased toward basic residues: residues 156–166 (SHTKPYVRSKG) and 173–183 (RGRRKSRGFRV).

The protein belongs to the eukaryotic ribosomal protein eL18 family.

The polypeptide is Large ribosomal subunit protein eL18 (RPL18) (Cicer arietinum (Chickpea)).